Reading from the N-terminus, the 185-residue chain is Auxin-responsive protein IAA34 (185 aa).

An EAR-like (transcriptional repression) motif is present at residues 63 to 67 (LGLSL). The 89-residue stretch at 92-180 (WGYVKVTMDG…ERLRITRRND (89 aa)) folds into the PB1 domain.

The protein belongs to the Aux/IAA family. As to quaternary structure, homodimers and heterodimers.

It localises to the nucleus. Its function is as follows. Aux/IAA proteins are short-lived transcriptional factors that function as repressors of early auxin response genes at low auxin concentrations. Repression is thought to result from the interaction with auxin response factors (ARFs), proteins that bind to the auxin-responsive promoter element (AuxRE). Formation of heterodimers with ARF proteins may alter their ability to modulate early auxin response genes expression. This chain is Auxin-responsive protein IAA34 (IAA34), found in Arabidopsis thaliana (Mouse-ear cress).